Consider the following 434-residue polypeptide: MFS-type transporter pynF (434 aa).

Over residues 1-13 (MSHDQRSPSEEVS) the composition is skewed to basic and acidic residues. The interval 1-34 (MSHDQRSPSEEVSRTALSKPASESTIVGDGHHPL) is disordered. Helical transmembrane passes span 44 to 64 (WLVV…LNAF), 84 to 104 (IAWI…VVGP), 109 to 129 (VGAT…LMLT), 138 to 158 (LILA…YPTI), 171 to 191 (IALG…TEII), 203 to 223 (TVRA…VLII), 249 to 269 (LLFS…FFYL), 280 to 302 (VTGA…VLTG), 311 to 331 (FNVI…LHKI), 334 to 354 (SGAI…LISL), 375 to 395 (LMMG…GALL), and 402 to 422 (WYGF…VTIL).

This sequence belongs to the major facilitator superfamily. Monocarboxylate porter (TC 2.A.1.13) family.

The protein localises to the cell membrane. MFS-type transporter; part of the gene cluster that mediates the biosynthesis of pyranonigrins, a family of antioxidative compounds. May be involved in the secretion of pyranonigrins. The protein is MFS-type transporter pynF of Aspergillus niger (strain ATCC MYA-4892 / CBS 513.88 / FGSC A1513).